The primary structure comprises 357 residues: Protein RecA (357 aa).

71–78 (GPESSGKT) is an ATP binding site.

This sequence belongs to the RecA family.

It is found in the cytoplasm. Its function is as follows. Can catalyze the hydrolysis of ATP in the presence of single-stranded DNA, the ATP-dependent uptake of single-stranded DNA by duplex DNA, and the ATP-dependent hybridization of homologous single-stranded DNAs. It interacts with LexA causing its activation and leading to its autocatalytic cleavage. In Ehrlichia canis (strain Jake), this protein is Protein RecA.